The following is a 334-amino-acid chain: Leukocyte cell-derived chemotaxin 1 (334 aa).

A helical transmembrane segment spans residues 45-65; it reads VVLISGAVLLLFGAIGAFYFW. In terms of domain architecture, BRICHOS spans 104–201; the sequence is GSGAEEAIAV…LCGDLPIFWL (98 aa). Cysteines 131 and 193 form a disulfide. A propeptide spanning residues 211-214 is cleaved from the precursor; that stretch reads RERR. The tract at residues 218–268 is disordered; the sequence is RKIVPTTTKRPHSGPRSNPGAGRLNNETRPSVQEDSQAFNPDNPYHQQEGE. Polar residues predominate over residues 242–257; it reads NNETRPSVQEDSQAFN. N243 is a glycosylation site (N-linked (GlcNAc...) asparagine). Disulfide bonds link C282–C286, C283–C323, C293–C317, and C297–C313.

This sequence belongs to the chondromodulin-1 family. In terms of processing, after cleavage, the post-translationally modified ChM-I is secreted as a glycoprotein. As to expression, detected in cartilage and cardiac valves (at protein level). Detected in the laminae fibrosa, spongiosa and ventricularis layers of normal cardiac valves (at protein level). Expression is decreased cardiac valves of patients with valvular heart disease (at protein level). Weakly expressed in chondrosarcoma.

It localises to the secreted. The protein localises to the extracellular space. The protein resides in the extracellular matrix. Its subcellular location is the endomembrane system. In terms of biological role, bifunctional growth regulator that stimulates the growth of cultured chondrocytes in the presence of basic fibroblast growth factor (FGF) but inhibits the growth of cultured vascular endothelial cells. May contribute to the rapid growth of cartilage and vascular invasion prior to the replacement of cartilage by bone during endochondral bone development. Inhibits in vitro tube formation and mobilization of endothelial cells. Plays a role as antiangiogenic factor in cardiac valves to suppress neovascularization. The polypeptide is Leukocyte cell-derived chemotaxin 1 (Homo sapiens (Human)).